We begin with the raw amino-acid sequence, 580 residues long: MESLSRAGQEMSLAALKQHDPYITSIADLTGQVALYTFCPKANQWEKTDIEGTLFVYRRSASPYHGFTIVNRLNMHNLVEPVNKDLEFQLHEPFLLYRNASLSIYSIWFYDKNDCHRIAKLMADVLEEETRRSQQAARDKQSPNQANGCSDHRPIDILEMLSRAKDEYERNQMGDSNISSPGLQPSTQISNLGSTETLEETPSGLQDKSALSGHKHLTVEELFGTSLPKEQPTVVGLESEEVEKLPGDASQKEPSSFLPFSFEPSGGGPQSENMGIRPAAHHSVQPEVTTPVLITPASITQSSEKQAPSYAIPLHPVLSPTLPAEASTAQAPPSLPRSTTMMQAVKTTPRQRSPLSSQPVPELSQASLAASQSPFRAPLNVTNTASTSLPSVDLLQKLRLTQQHDQIQTQSLGKGAVAPSFSPAAGQLATPESFIEPPPKTAAARASASLSNMVLAPLQSMQQNQDPEVFAQPKVLSSAIPVAGPALVTATTSAVSSVLLSPSVFQQTVTRSSDLERKASSPSPLTVGTSENQRKPSIILSKSQLQDTLIHLIKNDSSFLSTLHEVYLQVLTKNKDNHNL.

Serine 62 carries the phosphoserine modification. The span at 132–141 shows a compositional bias: basic and acidic residues; the sequence is RSQQAARDKQ. 3 disordered regions span residues 132 to 154, 172 to 209, and 245 to 276; these read RSQQAARDKQSPNQANGCSDHRP, QMGDSNISSPGLQPSTQISNLGSTETLEETPSGLQDKS, and LPGDASQKEPSSFLPFSFEPSGGGPQSENMGI. Phosphoserine occurs at positions 142, 179, and 180. Polar residues predominate over residues 173–196; sequence MGDSNISSPGLQPSTQISNLGSTE. The segment covering 253 to 264 has biased composition (low complexity); sequence EPSSFLPFSFEP. Residues serine 319 and serine 334 each carry the phosphoserine modification. Residues 343–359 are compositionally biased toward polar residues; sequence QAVKTTPRQRSPLSSQP. The interval 343–371 is disordered; the sequence is QAVKTTPRQRSPLSSQPVPELSQASLAAS. Threonine 348 is modified (phosphothreonine). Serine 353 bears the Phosphoserine mark. Arginine 376 is modified (asymmetric dimethylarginine). Threonine 401 is subject to Phosphothreonine. Phosphoserine occurs at positions 422, 520, 521, and 523. Residues 510–533 are disordered; sequence TRSSDLERKASSPSPLTVGTSENQ. Polar residues predominate over residues 520-531; it reads SSPSPLTVGTSE. Phosphothreonine occurs at positions 526 and 529.

The protein belongs to the DCP1 family. As to quaternary structure, forms a complex with EDC3, DCP2, DDX6 and EDC4/HEDLS, within this complex directly interacts with EDC3. Part of a cytoplasmic complex containing proteins involved in mRNA decay, including XRN1 and LSM1. Interacts with DCP1B. Interacts with DCP2. Interacts with DDX17 in an RNA-independent manner. Interacts with PNRC2. Interacts with SMAD4. Interacts with UPF1. Interacts with ZC3HAV1. Interacts with ZFP36L1. Interacts with NBDY. Interacts with DHX34; the interaction is RNA-independent. Post-translationally, (Microbial infection) Cleaved by porcine reproductive and respiratory syndrome virus serine protease nsp4 after Glu-238. The cleavage inhibits DCP1A function.

It is found in the cytoplasm. The protein resides in the P-body. Its subcellular location is the nucleus. It catalyses the reaction a 5'-end (N(7)-methyl 5'-triphosphoguanosine)-ribonucleoside in mRNA + H2O = N(7)-methyl-GDP + a 5'-end phospho-ribonucleoside in mRNA + 2 H(+). Necessary for the degradation of mRNAs, both in normal mRNA turnover and in nonsense-mediated mRNA decay. Removes the 7-methyl guanine cap structure from mRNA molecules, yielding a 5'-phosphorylated mRNA fragment and 7m-GDP. Contributes to the transactivation of target genes after stimulation by TGFB1. Essential for embryonic development. The protein is mRNA-decapping enzyme 1A (DCP1A) of Sus scrofa (Pig).